Consider the following 73-residue polypeptide: Small ribosomal subunit protein bS18B (73 aa).

It belongs to the bacterial ribosomal protein bS18 family. Part of the 30S ribosomal subunit. Forms a tight heterodimer with protein bS6.

In terms of biological role, binds as a heterodimer with protein bS6 to the central domain of the 16S rRNA, where it helps stabilize the platform of the 30S subunit. The protein is Small ribosomal subunit protein bS18B of Frankia alni (strain DSM 45986 / CECT 9034 / ACN14a).